The primary structure comprises 360 residues: Phospho-N-acetylmuramoyl-pentapeptide-transferase (360 aa).

Helical transmembrane passes span 27–47 (GAVM…IEWL), 73–93 (TMGG…WADL), 98–118 (VWAV…DDYL), 134–154 (LVAQ…LGQG), 168–188 (LTFN…VGAS), 199–219 (GLAI…AYLV), 239–259 (LAVF…FNAP), 263–283 (VFMG…VSVV), 288–308 (IVLA…IVQV), and 337–357 (TVVI…LSTL).

Belongs to the glycosyltransferase 4 family. MraY subfamily. The cofactor is Mg(2+).

The protein localises to the cell inner membrane. It carries out the reaction UDP-N-acetyl-alpha-D-muramoyl-L-alanyl-gamma-D-glutamyl-meso-2,6-diaminopimeloyl-D-alanyl-D-alanine + di-trans,octa-cis-undecaprenyl phosphate = di-trans,octa-cis-undecaprenyl diphospho-N-acetyl-alpha-D-muramoyl-L-alanyl-D-glutamyl-meso-2,6-diaminopimeloyl-D-alanyl-D-alanine + UMP. It functions in the pathway cell wall biogenesis; peptidoglycan biosynthesis. In terms of biological role, catalyzes the initial step of the lipid cycle reactions in the biosynthesis of the cell wall peptidoglycan: transfers peptidoglycan precursor phospho-MurNAc-pentapeptide from UDP-MurNAc-pentapeptide onto the lipid carrier undecaprenyl phosphate, yielding undecaprenyl-pyrophosphoryl-MurNAc-pentapeptide, known as lipid I. The chain is Phospho-N-acetylmuramoyl-pentapeptide-transferase from Rhodospirillum rubrum (strain ATCC 11170 / ATH 1.1.1 / DSM 467 / LMG 4362 / NCIMB 8255 / S1).